Consider the following 212-residue polypeptide: Adenine phosphoribosyltransferase (212 aa).

This sequence belongs to the purine/pyrimidine phosphoribosyltransferase family. Homodimer.

Its subcellular location is the cytoplasm. It catalyses the reaction AMP + diphosphate = 5-phospho-alpha-D-ribose 1-diphosphate + adenine. It participates in purine metabolism; AMP biosynthesis via salvage pathway; AMP from adenine: step 1/1. In terms of biological role, catalyzes a salvage reaction resulting in the formation of AMP, that is energically less costly than de novo synthesis. The polypeptide is Adenine phosphoribosyltransferase (Mycobacterium tuberculosis (strain ATCC 25618 / H37Rv)).